We begin with the raw amino-acid sequence, 188 residues long: Putative manganese efflux pump MntP (188 aa).

Helical transmembrane passes span 1–21 (MLIQ…AVSI), 40–60 (LWFG…ASTF), 64–84 (VTAV…GNMV), 105–127 (HMLP…FAFM), 131–153 (IWLS…LYIG), and 166–186 (IAGG…HLGF).

This sequence belongs to the MntP (TC 9.B.29) family.

The protein resides in the cell membrane. In terms of biological role, probably functions as a manganese efflux pump. This is Putative manganese efflux pump MntP from Bifidobacterium adolescentis (strain ATCC 15703 / DSM 20083 / NCTC 11814 / E194a).